The primary structure comprises 259 residues: Imidazole glycerol phosphate synthase subunit HisF (259 aa).

Catalysis depends on residues aspartate 11 and aspartate 130.

It belongs to the HisA/HisF family. In terms of assembly, heterodimer of HisH and HisF.

It is found in the cytoplasm. The catalysed reaction is 5-[(5-phospho-1-deoxy-D-ribulos-1-ylimino)methylamino]-1-(5-phospho-beta-D-ribosyl)imidazole-4-carboxamide + L-glutamine = D-erythro-1-(imidazol-4-yl)glycerol 3-phosphate + 5-amino-1-(5-phospho-beta-D-ribosyl)imidazole-4-carboxamide + L-glutamate + H(+). It participates in amino-acid biosynthesis; L-histidine biosynthesis; L-histidine from 5-phospho-alpha-D-ribose 1-diphosphate: step 5/9. In terms of biological role, IGPS catalyzes the conversion of PRFAR and glutamine to IGP, AICAR and glutamate. The HisF subunit catalyzes the cyclization activity that produces IGP and AICAR from PRFAR using the ammonia provided by the HisH subunit. In Lactococcus lactis subsp. cremoris (strain SK11), this protein is Imidazole glycerol phosphate synthase subunit HisF.